We begin with the raw amino-acid sequence, 356 residues long: tRNA pseudouridine synthase D (356 aa).

Aspartate 84 serves as the catalytic Nucleophile. The TRUD domain maps to 159 to 302 (GVPNYYGPQR…RRGARRPIRV (144 aa)).

Belongs to the pseudouridine synthase TruD family.

It carries out the reaction uridine(13) in tRNA = pseudouridine(13) in tRNA. In terms of biological role, responsible for synthesis of pseudouridine from uracil-13 in transfer RNAs. The sequence is that of tRNA pseudouridine synthase D from Thermus thermophilus (strain ATCC 27634 / DSM 579 / HB8).